The chain runs to 253 residues: Triosephosphate isomerase (253 aa).

9-11 (NWK) is a substrate binding site. Catalysis depends on histidine 97, which acts as the Electrophile. The Proton acceptor role is filled by glutamate 169. Substrate is bound by residues glycine 175, serine 215, and 236–237 (GG).

It belongs to the triosephosphate isomerase family. As to quaternary structure, homodimer.

It is found in the cytoplasm. The enzyme catalyses D-glyceraldehyde 3-phosphate = dihydroxyacetone phosphate. Its pathway is carbohydrate biosynthesis; gluconeogenesis. It functions in the pathway carbohydrate degradation; glycolysis; D-glyceraldehyde 3-phosphate from glycerone phosphate: step 1/1. Its function is as follows. Involved in the gluconeogenesis. Catalyzes stereospecifically the conversion of dihydroxyacetone phosphate (DHAP) to D-glyceraldehyde-3-phosphate (G3P). The chain is Triosephosphate isomerase from Staphylococcus aureus (strain Mu50 / ATCC 700699).